We begin with the raw amino-acid sequence, 343 residues long: Probable xyloglucan endotransglucosylase/hydrolase protein 30 (343 aa).

Positions 1–23 are cleaved as a signal peptide; that stretch reads MSKSSYNHIFILILCLCLRSSSA. One can recognise a GH16 domain in the interval 24 to 224; that stretch reads FTNLNTLSFE…YKFAPFVAEF (201 aa). Glu109 serves as the catalytic Nucleophile. The active-site Proton donor is Glu113. Xyloglucan contacts are provided by residues Glu113 and 126–128; that span reads QTN. N-linked (GlcNAc...) asparagine glycosylation is present at Asn132. Xyloglucan contacts are provided by residues 136–140, 203–204, Gly208, and Arg285; these read HRGRE and DW. Cys280 and Cys293 are oxidised to a cystine. Residues 306–343 form a disordered region; the sequence is TGRLKFGGTEARERRRNRRQQRRPEIEIESDPDDRKLL.

The protein belongs to the glycosyl hydrolase 16 family. XTH group 3 subfamily. Contains at least one intrachain disulfide bond essential for its enzymatic activity. In terms of tissue distribution, predominantly expressed in green siliques.

The protein resides in the secreted. It is found in the cell wall. It localises to the extracellular space. The protein localises to the apoplast. The enzyme catalyses breaks a beta-(1-&gt;4) bond in the backbone of a xyloglucan and transfers the xyloglucanyl segment on to O-4 of the non-reducing terminal glucose residue of an acceptor, which can be a xyloglucan or an oligosaccharide of xyloglucan.. Catalyzes xyloglucan endohydrolysis (XEH) and/or endotransglycosylation (XET). Cleaves and religates xyloglucan polymers, an essential constituent of the primary cell wall, and thereby participates in cell wall construction of growing tissues. In Arabidopsis thaliana (Mouse-ear cress), this protein is Probable xyloglucan endotransglucosylase/hydrolase protein 30 (XTH30).